We begin with the raw amino-acid sequence, 199 residues long: Peptidyl-tRNA hydrolase (199 aa).

TRNA is bound at residue tyrosine 18. Histidine 23 acts as the Proton acceptor in catalysis. TRNA contacts are provided by tyrosine 72, asparagine 74, and asparagine 120.

The protein belongs to the PTH family. As to quaternary structure, monomer.

It is found in the cytoplasm. It catalyses the reaction an N-acyl-L-alpha-aminoacyl-tRNA + H2O = an N-acyl-L-amino acid + a tRNA + H(+). In terms of biological role, hydrolyzes ribosome-free peptidyl-tRNAs (with 1 or more amino acids incorporated), which drop off the ribosome during protein synthesis, or as a result of ribosome stalling. Functionally, catalyzes the release of premature peptidyl moieties from peptidyl-tRNA molecules trapped in stalled 50S ribosomal subunits, and thus maintains levels of free tRNAs and 50S ribosomes. This Bifidobacterium animalis subsp. lactis (strain AD011) protein is Peptidyl-tRNA hydrolase.